The following is a 343-amino-acid chain: Insertion element IS630 uncharacterized 39 kDa protein (343 aa).

This Shigella sonnei protein is Insertion element IS630 uncharacterized 39 kDa protein.